The following is a 585-amino-acid chain: Testis-specific serine kinase substrate (585 aa).

Positions 91–108 are enriched in low complexity; sequence EPDSSGTDSTTEDSGPLA. Residues 91 to 126 form a disordered region; the sequence is EPDSSGTDSTTEDSGPLALPGPPASPTTPWAPEDPD. Ser-224, Ser-281, and Ser-309 each carry phosphoserine. Disordered stretches follow at residues 262–309 and 559–585; these read SRHG…PSLS and LEGS…GSEQ.

Phosphorylated on serine residue(s) by STK22A/TSSK1 and STK22B/TSSK2.

The protein localises to the cytoplasm. Its subcellular location is the cytoskeleton. It is found in the microtubule organizing center. It localises to the centrosome. The protein resides in the centriole. In terms of biological role, may play a role in testicular physiology, most probably in the process of spermatogenesis or spermatid development. This is Testis-specific serine kinase substrate (Tsks) from Rattus norvegicus (Rat).